The primary structure comprises 748 residues: Glucans biosynthesis glucosyltransferase H (748 aa).

Transmembrane regions (helical) follow at residues Leu-85–Met-107, Phe-127–Leu-149, Gly-443–Leu-465, Ala-494–Ile-516, Gly-529–Ile-551, Leu-587–Leu-606, and Leu-608–Ser-630.

It belongs to the glycosyltransferase 2 family. OpgH subfamily.

It is found in the cell inner membrane. Its pathway is glycan metabolism; osmoregulated periplasmic glucan (OPG) biosynthesis. Involved in the biosynthesis of osmoregulated periplasmic glucans (OPGs). In Bradyrhizobium diazoefficiens (strain JCM 10833 / BCRC 13528 / IAM 13628 / NBRC 14792 / USDA 110), this protein is Glucans biosynthesis glucosyltransferase H.